A 214-amino-acid polypeptide reads, in one-letter code: Small ribosomal subunit protein eS1 (214 aa).

The protein belongs to the eukaryotic ribosomal protein eS1 family.

The chain is Small ribosomal subunit protein eS1 from Aeropyrum pernix (strain ATCC 700893 / DSM 11879 / JCM 9820 / NBRC 100138 / K1).